The chain runs to 206 residues: Thymidylate kinase (206 aa).

An ATP-binding site is contributed by 10–17; that stretch reads GIDGAGKS.

This sequence belongs to the thymidylate kinase family.

The enzyme catalyses dTMP + ATP = dTDP + ADP. Functionally, phosphorylation of dTMP to form dTDP in both de novo and salvage pathways of dTTP synthesis. In Neisseria meningitidis serogroup C / serotype 2a (strain ATCC 700532 / DSM 15464 / FAM18), this protein is Thymidylate kinase.